The chain runs to 364 residues: Fructose-bisphosphate aldolase, non-muscle type (364 aa).

2 residues coordinate substrate: Arg56 and Lys147. Residue Lys230 is the Schiff-base intermediate with dihydroxyacetone-P of the active site.

The protein belongs to the class I fructose-bisphosphate aldolase family. Homotetramer. Expressed mainly in the liver and also in brain and other tissues, except for the heart muscle.

The catalysed reaction is beta-D-fructose 1,6-bisphosphate = D-glyceraldehyde 3-phosphate + dihydroxyacetone phosphate. The protein operates within carbohydrate degradation; glycolysis; D-glyceraldehyde 3-phosphate and glycerone phosphate from D-glucose: step 4/4. The polypeptide is Fructose-bisphosphate aldolase, non-muscle type (Lethenteron camtschaticum (Japanese lamprey)).